Reading from the N-terminus, the 149-residue chain is Transcriptional repressor NrdR (149 aa).

A zinc finger spans residues 3–34; sequence CPFCAAEETKVVDSRLAADGYQIRRRRECTSC. In terms of domain architecture, ATP-cone spans 49–139; sequence PYVIKNNGNR…VYLSFDDIEE (91 aa).

The protein belongs to the NrdR family. Requires Zn(2+) as cofactor.

Its function is as follows. Negatively regulates transcription of bacterial ribonucleotide reductase nrd genes and operons by binding to NrdR-boxes. This chain is Transcriptional repressor NrdR, found in Actinobacillus pleuropneumoniae serotype 3 (strain JL03).